An 84-amino-acid polypeptide reads, in one-letter code: MTDKIRTVQGKVISDKMDKSFVVAIERTVKHPIYGKFIRRTTKLHVHDEHNEAKLGDVVEVRGCRPLSKTKSHTLVRVVEKAQA.

It belongs to the universal ribosomal protein uS17 family. Part of the 30S ribosomal subunit.

One of the primary rRNA binding proteins, it binds specifically to the 5'-end of 16S ribosomal RNA. In Histophilus somni (strain 129Pt) (Haemophilus somnus), this protein is Small ribosomal subunit protein uS17.